The chain runs to 960 residues: Chromo domain-containing protein 1 (960 aa).

Positions 22–74 (YEVEDILADRVNKNGINEYYIKWAGYDWYDNTWEPEQNLFGAEKVLKKWKKRK) constitute a Chromo domain.

In terms of assembly, ago1, chp1 and tas3 interact to form the core of the RNA-induced transcriptional silencing (RITS) complex. The RITS complex interacts with the RDRC complex via interaction between ago1 and hrr1. Clr4 has a role in mediating this interaction. Interacts with dri1.

It localises to the nucleus. The protein resides in the cytoplasm. The protein localises to the cytoskeleton. Its subcellular location is the microtubule organizing center. It is found in the spindle pole body. Its function is as follows. Component of the kinetochore which plays a role in stabilizing microtubules and so allowing accurate chromosome segregation. Has a role in the RNA interference (RNAi) pathway which is important for heterochromatin formation and accurate chromosome segregation. A member of the RNA-induced transcriptional silencing (RITS) complex which is involved in the biosynthesis of dsRNA from primer siRNAs provided by the RNA-directed RNA polymerase (RDRC) complex. The polypeptide is Chromo domain-containing protein 1 (Schizosaccharomyces pombe (strain 972 / ATCC 24843) (Fission yeast)).